A 486-amino-acid chain; its full sequence is Stretch-activated cation channel yam8 (486 aa).

Positions 1-24 (MFFFSTHLILKILFFWSITRNIFG) are cleaved as a signal peptide. Residues 25–464 (ATYTSLLLNN…PGVEFYESGS (440 aa)) lie on the Extracellular side of the membrane. N-linked (GlcNAc...) asparagine glycosylation is found at Asn33, Asn49, Asn59, Asn82, and Asn93. A helical transmembrane segment spans residues 465–485 (ALLNISWRTFFISLIFWILFV). Position 486 (Glu486) is a topological domain, cytoplasmic.

It is found in the cell membrane. Functionally, calcium-permeable, cation-selective stretch-activated channel (SAC) that functions together with CCH1 to mediate calcium entry into cells. Required during mating. In Schizosaccharomyces pombe (strain 972 / ATCC 24843) (Fission yeast), this protein is Stretch-activated cation channel yam8.